The following is a 436-amino-acid chain: Methyl-accepting chemotaxis protein Amb0994 (436 aa).

Residues 1-8 (METTLGSY) are Cytoplasmic-facing. Residues 9–29 (ARTLSLGMLVPSAICLLAGTF) traverse the membrane as a helical segment. Gly-30 is a topological domain (periplasmic). Residues 31–51 (LLGGSSIALWVVIAVSLLGVV) form a helical membrane-spanning segment. The Cytoplasmic portion of the chain corresponds to 52–436 (GGVKIGGSAR…DGFIARIGGR (385 aa)). The Methyl-accepting transducer domain maps to 180–416 (AATELEASSG…QVADAASELS (237 aa)). At Gln-211 the chain carries Glutamate methyl ester (Gln). The residue at position 225 (Glu-225) is a Glutamate methyl ester (Glu). The tract at residues 321–436 (TEDITSQVAH…DGFIARIGGR (116 aa)) is required for interaction with MamK and to respond to the magnetic field.

It belongs to the methyl-accepting chemotaxis (MCP) protein family. Interacts with MamK at cell poles and septa.

Its subcellular location is the cell inner membrane. Its function is as follows. Probable methyl-accepting taxis protein. May be the receptor that senses the torque generated from the interaction between the magnetosome dipole moment and the external magnetic field. Overproduction interferes with magnetotaxis, cells respond more slowly to changes in the magnetic field; requires the MamK-interacting C-terminus of the protein. The effect of magnetic sensing is to control flagellar rotation. In terms of biological role, chemotactic-signal transducers respond to changes in the concentration of attractants and repellents in the environment, transduce a signal from the outside to the inside of the cell, and facilitate sensory adaptation through variation of methylation levels. Attractants increase the level of methylation while repellents decrease the level of methylation. In Paramagnetospirillum magneticum (strain ATCC 700264 / AMB-1) (Magnetospirillum magneticum), this protein is Methyl-accepting chemotaxis protein Amb0994.